Here is a 75-residue protein sequence, read N- to C-terminus: Small ribosomal subunit protein bS21A (75 aa).

It belongs to the bacterial ribosomal protein bS21 family.

The sequence is that of Small ribosomal subunit protein bS21A (rpsU1) from Agrobacterium fabrum (strain C58 / ATCC 33970) (Agrobacterium tumefaciens (strain C58)).